A 106-amino-acid chain; its full sequence is Thiosulfate sulfurtransferase GlpE (106 aa).

The Rhodanese domain maps to 17–105 (EQGEAKLVDI…WQRAQLPIVR (89 aa)). Cys-65 acts as the Cysteine persulfide intermediate in catalysis.

Belongs to the GlpE family.

It localises to the cytoplasm. It catalyses the reaction thiosulfate + hydrogen cyanide = thiocyanate + sulfite + 2 H(+). The catalysed reaction is thiosulfate + [thioredoxin]-dithiol = [thioredoxin]-disulfide + hydrogen sulfide + sulfite + 2 H(+). In terms of biological role, transferase that catalyzes the transfer of sulfur from thiosulfate to thiophilic acceptors such as cyanide or dithiols. May function in a CysM-independent thiosulfate assimilation pathway by catalyzing the conversion of thiosulfate to sulfite, which can then be used for L-cysteine biosynthesis. The sequence is that of Thiosulfate sulfurtransferase GlpE from Vibrio parahaemolyticus serotype O3:K6 (strain RIMD 2210633).